Consider the following 399-residue polypeptide: Glutamine synthetase 1, mitochondrial (399 aa).

The transit peptide at 1–27 (MALRVAGLFLKKELVAPATQQLRLLRT) directs the protein to the mitochondrion. The GS beta-grasp domain maps to 62–143 (VQATYLWIDG…VLCDTYSADG (82 aa)). The region spanning 150–399 (KRAAFQAAID…AIVRTCLLNE (250 aa)) is the GS catalytic domain.

The protein belongs to the glutamine synthetase family. In terms of assembly, homooctamer.

The protein resides in the mitochondrion. It catalyses the reaction L-glutamate + NH4(+) + ATP = L-glutamine + ADP + phosphate + H(+). This Drosophila melanogaster (Fruit fly) protein is Glutamine synthetase 1, mitochondrial (Gs1).